Reading from the N-terminus, the 138-residue chain is Large ribosomal subunit protein uL16 (138 aa).

A compositionally biased stretch (basic residues) spans 1 to 15 (MLSPRKVKYRKKQRG). Residues 1 to 21 (MLSPRKVKYRKKQRGRLSGEA) form a disordered region.

Belongs to the universal ribosomal protein uL16 family. In terms of assembly, part of the 50S ribosomal subunit.

In terms of biological role, binds 23S rRNA and is also seen to make contacts with the A and possibly P site tRNAs. In Borrelia duttonii (strain Ly), this protein is Large ribosomal subunit protein uL16.